We begin with the raw amino-acid sequence, 169 residues long: Neurotensin/neuromedin N (169 aa).

A signal peptide spans 1–22 (MIGMNLQLVCLTLLAFSSWSLC).

This sequence belongs to the neurotensin family. Interacts with NTSR1. Interacts with SORT1. Interacts with SORL1. Post-translationally, neurotensin is cleaved and degraded by Angiotensin-converting enzyme (ACE) and neprilysin (MME).

The protein resides in the secreted. The protein localises to the cytoplasmic vesicle. Its subcellular location is the secretory vesicle. Neurotensin may play an endocrine or paracrine role in the regulation of fat metabolism. It causes contraction of smooth muscle. In Rattus norvegicus (Rat), this protein is Neurotensin/neuromedin N (Nts).